The sequence spans 146 residues: Hemoglobin subunit beta-1 (146 aa).

The region spanning 2 to 146 (GLTAHDRQLI…IADALGKGYH (145 aa)) is the Globin domain. Histidine 63 and histidine 92 together coordinate heme b.

It belongs to the globin family. Heterotetramer of two alpha chains and two beta chains. Red blood cells.

In terms of biological role, involved in oxygen transport from the lung to the various peripheral tissues. This is Hemoglobin subunit beta-1 (hbb1) from Xenopus laevis (African clawed frog).